Consider the following 299-residue polypeptide: AT-hook motif nuclear-localized protein 25 (299 aa).

2 disordered regions span residues 1–87 (MSSY…RDSP) and 216–251 (EEET…CESN). Basic and acidic residues-rich tracts occupy residues 14 to 23 (HLQRPEDSRT) and 33 to 42 (NRSEADEAKA). Composition is skewed to low complexity over residues 44–72 (TTPT…PAGS) and 224–239 (TTGV…QSSE). Positions 63-75 (RRPRGRPAGSKNK) form a DNA-binding region, a.T hook. Residues 87–233 (PNVLRSHVLE…TTGVQQQQPE (147 aa)) form the PPC domain. Over residues 240 to 251 (VTGSGAQACESN) the composition is skewed to polar residues.

Homodimer. Interacts with AHL27 and AHL29. As to expression, expressed in seedlings, leaves, stems, floral tips and flowers.

The protein localises to the nucleus. Functionally, transcription factor that specifically binds AT-rich DNA sequences related to the nuclear matrix attachment regions (MARs). Binds the DNA sequence GNFEI (GA-negative feedback element I) in the GA3OX1 promoter. Binding to GNFEI sequence is required for GA-negative feedback regulation of GA3OX1. The polypeptide is AT-hook motif nuclear-localized protein 25 (Arabidopsis thaliana (Mouse-ear cress)).